The primary structure comprises 161 residues: Phosphopantetheine adenylyltransferase (161 aa).

Thr-11 lines the substrate pocket. Residues 11–12 (TF) and His-19 each bind ATP. Substrate-binding residues include Lys-43, Thr-75, and Arg-89. ATP contacts are provided by residues 90–92 (GLR), Glu-100, and 125–131 (YSFLSSS).

This sequence belongs to the bacterial CoaD family. As to quaternary structure, homohexamer. It depends on Mg(2+) as a cofactor.

It is found in the cytoplasm. The catalysed reaction is (R)-4'-phosphopantetheine + ATP + H(+) = 3'-dephospho-CoA + diphosphate. It functions in the pathway cofactor biosynthesis; coenzyme A biosynthesis; CoA from (R)-pantothenate: step 4/5. Reversibly transfers an adenylyl group from ATP to 4'-phosphopantetheine, yielding dephospho-CoA (dPCoA) and pyrophosphate. The sequence is that of Phosphopantetheine adenylyltransferase from Listeria innocua serovar 6a (strain ATCC BAA-680 / CLIP 11262).